Here is a 590-residue protein sequence, read N- to C-terminus: Protein I'm not dead yet (590 aa).

Transmembrane regions (helical) follow at residues 43–63 (GLVV…NEGA), 82–102 (ALPL…MGIM), 115–135 (TLVM…CNLH), 153–173 (LHFG…NAAC), 224–244 (LCYY…TIIG), 270–290 (TFMF…FVFL), 329–349 (LGPM…MVVM), 373–393 (SMPT…YAFL), 457–477 (VLPN…LTAF), 509–529 (AGLA…NALV), and 540–560 (MAIA…VFCQ).

The protein belongs to the SLC13A/DASS transporter (TC 2.A.47) family. NADC subfamily. In adults, abundantly expressed in the fat body, basolateral region of midgut cells and oenocytes. Low level expression is seen in the halteres, procardia, restricted regions of the esophagus and hindgut, base of the legs and in a subset of cells in the third segment of the antennae.

Its subcellular location is the basolateral cell membrane. Its function is as follows. Cation-independent electroneutral transporter (not associated with membrane depolarization) of a variety of tricarboxylic and dicarboxylic acid-cycle intermediates. There is also small, but detectable, transport of monocarboxylics. Transport is through the epithelium of the gut and across the plasma membranes of organs involved in intermediary metabolism and storage. Affinity for substrates is citrate &gt; succinate &gt; pyruvate. Fumarate, a-ketoglutarate, and glutarate are also transported, but not lactate. Transport mechanism that is not coupled to Na(+), K(+), or Cl(-). Function is shown in Xenopus oocytes and human retinal pigment epithelial (HRPE) cell lines. The chain is Protein I'm not dead yet (Indy) from Drosophila melanogaster (Fruit fly).